The sequence spans 407 residues: Protein ZNF365 (407 aa).

Phosphoserine is present on Ser16. Residues 26–51 form a C2H2-type; degenerate zinc finger; that stretch reads FRCPRCGDHTRFRSLSSLRAHLEFSH. Ser138 carries the post-translational modification Phosphoserine. A coiled-coil region spans residues 169–296; it reads VEAVDRTIEK…KQLEYYQSQQ (128 aa). A Phosphothreonine modification is found at Thr175. The tract at residues 347–392 is disordered; it reads LKKAKDDRASMQPAKAIHEQAESSRDLCRPPKKGELLGFGRKGNIR. A compositionally biased stretch (basic and acidic residues) spans 362-381; the sequence is AIHEQAESSRDLCRPPKKGE. Ser369 carries the phosphoserine modification.

As to quaternary structure, homodimers. Interacts with NDE1 and NDEL1. Interacts with DISC1. Interacts with PARP1. Interacts with MCRS1.

It localises to the cytoplasm. Its subcellular location is the cytoskeleton. The protein resides in the microtubule organizing center. It is found in the centrosome. Functionally, involved in the regulation of neurogenesis. Negatively regulates neurite outgrowth. Involved in the morphogenesis of basket cells in the somatosensory cortex during embryogenesis. Involved in the positive regulation of oligodendrocyte differentiation during postnatal growth. Involved in dendritic arborization, morphogenesis of spine density dendrite, and establishment of postsynaptic dendrite density in cortical pyramidal neurons. Involved in homologous recombination (HR) repair pathway. Required for proper resolution of DNA double-strand breaks (DSBs) by HR. Is required for recovery of stalled replication forks, and directly contributes to genomic stability. Interacts with PARP1 and mediates MRE11-dependent DNA end resection during replication fork recovery. Contributes to genomic stability by preventing telomere dysfunction. The polypeptide is Protein ZNF365 (ZNF365) (Pongo abelii (Sumatran orangutan)).